The sequence spans 78 residues: Beta-defensin 105 (78 aa).

The signal sequence occupies residues 1–27 (MALIRKTFYFLFAMFFILVQLPSGCQA). 3 disulfides stabilise this stretch: C43–C74, C53–C67, and C57–C73.

It belongs to the beta-defensin family. In terms of tissue distribution, specifically expressed in testis.

It is found in the secreted. In terms of biological role, has antibacterial activity. The sequence is that of Beta-defensin 105 (DEFB105A) from Homo sapiens (Human).